Reading from the N-terminus, the 245-residue chain is Leucyl/phenylalanyl-tRNA--protein transferase (245 aa).

This sequence belongs to the L/F-transferase family.

Its subcellular location is the cytoplasm. The catalysed reaction is N-terminal L-lysyl-[protein] + L-leucyl-tRNA(Leu) = N-terminal L-leucyl-L-lysyl-[protein] + tRNA(Leu) + H(+). It carries out the reaction N-terminal L-arginyl-[protein] + L-leucyl-tRNA(Leu) = N-terminal L-leucyl-L-arginyl-[protein] + tRNA(Leu) + H(+). The enzyme catalyses L-phenylalanyl-tRNA(Phe) + an N-terminal L-alpha-aminoacyl-[protein] = an N-terminal L-phenylalanyl-L-alpha-aminoacyl-[protein] + tRNA(Phe). Functions in the N-end rule pathway of protein degradation where it conjugates Leu, Phe and, less efficiently, Met from aminoacyl-tRNAs to the N-termini of proteins containing an N-terminal arginine or lysine. This is Leucyl/phenylalanyl-tRNA--protein transferase from Paraburkholderia phymatum (strain DSM 17167 / CIP 108236 / LMG 21445 / STM815) (Burkholderia phymatum).